We begin with the raw amino-acid sequence, 61 residues long: Protein stunted (61 aa).

The sufficient for mth activation stretch occupies residues 3 to 15 (AWRAAGITYIQYS).

It belongs to the eukaryotic ATPase epsilon family.

Activates the G-protein coupled receptor mth in vitro, leading to increased intracellular calcium ion levels. The protein is Protein stunted of Drosophila melanogaster (Fruit fly).